A 132-amino-acid chain; its full sequence is MSTASAAAVVKQKVEAPVHPMDARIDELTDYIMKNCLWQFHSRSWDRERQNAEILKKTKELLCGEPVDLSTSHDRCYWVDAVCLADDYREHYPWINSMSKEEIGSLMQGLKDRMDYLTITGSLNEELSDKHY.

As to quaternary structure, hexamer of two alpha, two beta, and two delta chains. The cofactor is iron-sulfur cluster.

The enzyme catalyses N2 + 8 reduced [2Fe-2S]-[ferredoxin] + 16 ATP + 16 H2O = H2 + 8 oxidized [2Fe-2S]-[ferredoxin] + 2 NH4(+) + 16 ADP + 16 phosphate + 6 H(+). The key enzymatic reactions in nitrogen fixation are catalyzed by the nitrogenase complex, which has 2 components: the iron protein (component 2) and a component 1 which is either a molybdenum-iron protein, a vanadium-iron, or an iron-iron protein. This chain is Nitrogenase iron-iron protein delta chain (anfG), found in Azotobacter vinelandii.